Here is a 221-residue protein sequence, read N- to C-terminus: Ribosomal RNA large subunit methyltransferase E (221 aa).

5 residues coordinate S-adenosyl-L-methionine: G60, W62, D89, D105, and D134. Catalysis depends on K174, which acts as the Proton acceptor.

Belongs to the class I-like SAM-binding methyltransferase superfamily. RNA methyltransferase RlmE family.

Its subcellular location is the cytoplasm. It catalyses the reaction uridine(2552) in 23S rRNA + S-adenosyl-L-methionine = 2'-O-methyluridine(2552) in 23S rRNA + S-adenosyl-L-homocysteine + H(+). Specifically methylates the uridine in position 2552 of 23S rRNA at the 2'-O position of the ribose in the fully assembled 50S ribosomal subunit. This is Ribosomal RNA large subunit methyltransferase E from Cupriavidus necator (strain ATCC 17699 / DSM 428 / KCTC 22496 / NCIMB 10442 / H16 / Stanier 337) (Ralstonia eutropha).